A 150-amino-acid chain; its full sequence is Ribosome maturation factor RimP (150 aa).

This sequence belongs to the RimP family.

The protein resides in the cytoplasm. In terms of biological role, required for maturation of 30S ribosomal subunits. This Thermotoga maritima (strain ATCC 43589 / DSM 3109 / JCM 10099 / NBRC 100826 / MSB8) protein is Ribosome maturation factor RimP.